Reading from the N-terminus, the 398-residue chain is Probable aminomethyltransferase (398 aa).

This sequence belongs to the GcvT family. In terms of assembly, the glycine cleavage system is composed of four proteins: P, T, L and H.

It catalyses the reaction N(6)-[(R)-S(8)-aminomethyldihydrolipoyl]-L-lysyl-[protein] + (6S)-5,6,7,8-tetrahydrofolate = N(6)-[(R)-dihydrolipoyl]-L-lysyl-[protein] + (6R)-5,10-methylene-5,6,7,8-tetrahydrofolate + NH4(+). In terms of biological role, the glycine cleavage system catalyzes the degradation of glycine. The sequence is that of Probable aminomethyltransferase from Pyrococcus abyssi (strain GE5 / Orsay).